Consider the following 118-residue polypeptide: NLYQFKNMIHCTVPNRPWWHFANYGCYCGRGGKGTPVDDLDRCCQIHDKCYDEAEKISGCWPYIKTYTYESCQGTLTCKDGGKCAASVCDCDRVAANCFARATYNDKNYNIDFNARCQ.

7 disulfides stabilise this stretch: C11–C72, C26–C117, C28–C44, C43–C98, C50–C91, C60–C84, and C78–C89. The Ca(2+) site is built by Y27, G29, and G31. H47 is an active-site residue. D48 contributes to the Ca(2+) binding site. The active site involves D92.

Belongs to the phospholipase A2 family. Group I subfamily. D49 sub-subfamily. The cofactor is Ca(2+). Expressed by the venom gland.

It is found in the secreted. The catalysed reaction is a 1,2-diacyl-sn-glycero-3-phosphocholine + H2O = a 1-acyl-sn-glycero-3-phosphocholine + a fatty acid + H(+). In terms of biological role, PLA2 catalyzes the calcium-dependent hydrolysis of the 2-acyl groups in 3-sn-phosphoglycerides. This is Basic phospholipase A2 1 from Naja melanoleuca (Forest cobra).